Consider the following 466-residue polypeptide: UDP-N-acetylmuramoylalanine--D-glutamate ligase (466 aa).

Gly115–Thr121 provides a ligand contact to ATP.

The protein belongs to the MurCDEF family.

It is found in the cytoplasm. The catalysed reaction is UDP-N-acetyl-alpha-D-muramoyl-L-alanine + D-glutamate + ATP = UDP-N-acetyl-alpha-D-muramoyl-L-alanyl-D-glutamate + ADP + phosphate + H(+). The protein operates within cell wall biogenesis; peptidoglycan biosynthesis. Functionally, cell wall formation. Catalyzes the addition of glutamate to the nucleotide precursor UDP-N-acetylmuramoyl-L-alanine (UMA). In Chlorobium phaeobacteroides (strain BS1), this protein is UDP-N-acetylmuramoylalanine--D-glutamate ligase.